The sequence spans 171 residues: Viral CASP8 and FADD-like apoptosis regulator (171 aa).

2 DED domains span residues 1 to 74 (MSHY…RIFG) and 92 to 171 (PFRC…NLQV).

In terms of assembly, associates with the death-inducing signaling complex (DISC) formed by TNFRSF6, FADD and caspase-8. Interacts with FADD.

In terms of biological role, inhibits TNFRSF1A, TNFRSF6, TNFRSF10 and TNFRSF12 induced apoptosis. May interfere with caspase-8 recruitment and activation at the death-inducing signaling complex (DISC). May lead to higher virus production and contribute to virus persistence and oncogenicity. The sequence is that of Viral CASP8 and FADD-like apoptosis regulator from Equus caballus (Horse).